Here is a 417-residue protein sequence, read N- to C-terminus: Serine hydroxymethyltransferase (417 aa).

(6S)-5,6,7,8-tetrahydrofolate contacts are provided by residues Leu121 and 125–127; that span reads GHL. N6-(pyridoxal phosphate)lysine is present on Lys229. 355–357 lines the (6S)-5,6,7,8-tetrahydrofolate pocket; the sequence is SPF.

Belongs to the SHMT family. As to quaternary structure, homodimer. It depends on pyridoxal 5'-phosphate as a cofactor.

The protein localises to the cytoplasm. It catalyses the reaction (6R)-5,10-methylene-5,6,7,8-tetrahydrofolate + glycine + H2O = (6S)-5,6,7,8-tetrahydrofolate + L-serine. It functions in the pathway one-carbon metabolism; tetrahydrofolate interconversion. Its pathway is amino-acid biosynthesis; glycine biosynthesis; glycine from L-serine: step 1/1. Catalyzes the reversible interconversion of serine and glycine with tetrahydrofolate (THF) serving as the one-carbon carrier. This reaction serves as the major source of one-carbon groups required for the biosynthesis of purines, thymidylate, methionine, and other important biomolecules. Also exhibits THF-independent aldolase activity toward beta-hydroxyamino acids, producing glycine and aldehydes, via a retro-aldol mechanism. The polypeptide is Serine hydroxymethyltransferase (Yersinia enterocolitica serotype O:8 / biotype 1B (strain NCTC 13174 / 8081)).